A 342-amino-acid chain; its full sequence is Uroporphyrinogen decarboxylase (342 aa).

Substrate contacts are provided by residues 24–28, aspartate 74, tyrosine 151, serine 206, and histidine 322; that span reads RQAGR.

This sequence belongs to the uroporphyrinogen decarboxylase family. As to quaternary structure, homodimer.

The protein resides in the cytoplasm. It catalyses the reaction uroporphyrinogen III + 4 H(+) = coproporphyrinogen III + 4 CO2. It functions in the pathway porphyrin-containing compound metabolism; protoporphyrin-IX biosynthesis; coproporphyrinogen-III from 5-aminolevulinate: step 4/4. Its function is as follows. Catalyzes the decarboxylation of four acetate groups of uroporphyrinogen-III to yield coproporphyrinogen-III. The protein is Uroporphyrinogen decarboxylase of Paracoccus denitrificans (strain Pd 1222).